A 562-amino-acid polypeptide reads, in one-letter code: Gut esterase 1 (562 aa).

Positions 1–16 (MRVLLASLLIFGACWA) are cleaved as a signal peptide. A disulfide bridge links C75 with C93. S199 functions as the Acyl-ester intermediate in the catalytic mechanism. C251 and C259 form a disulfide bridge. Catalysis depends on charge relay system residues E320 and H451. A Prevents secretion from ER motif is present at residues 559–562 (KDEL).

It belongs to the type-B carboxylesterase/lipase family. As to expression, expressed only in the intestine.

It localises to the endoplasmic reticulum lumen. The catalysed reaction is a carboxylic ester + H2O = an alcohol + a carboxylate + H(+). This Caenorhabditis briggsae protein is Gut esterase 1 (ges-1).